The following is a 343-amino-acid chain: Zinc finger protein STP3 (343 aa).

2 disordered regions span residues 31 to 56 and 71 to 140; these read YNGE…SGSA and SNDV…KPRK. The segment covering 33–45 has biased composition (polar residues); sequence GEASSASTHPTLP. Composition is skewed to low complexity over residues 46–56, 71–86, and 94–120; these read NMNISNGSGSA, SNDV…FLPS, and SASA…AGPS. Phosphoserine is present on residues Ser-71 and Ser-111. The C2H2-type zinc finger occupies 169–191; it reads HKCPICHRGFARNNDLLRHKKRH. Residues 198 to 222 are disordered; that stretch reads SQSGVLSNHNDGKGGSVSPNDDDTH.

Its subcellular location is the nucleus. The sequence is that of Zinc finger protein STP3 (STP3) from Saccharomyces cerevisiae (strain ATCC 204508 / S288c) (Baker's yeast).